The primary structure comprises 415 residues: Meiotic driver wtf36 (415 aa).

Disordered stretches follow at residues 1 to 49 (MKNK…DLNN) and 67 to 99 (TTPP…SGTA). The segment covering 11-29 (SMDEMSAKNDNEIDLEKGP) has biased composition (basic and acidic residues). 7 helical membrane-spanning segments follow: residues 105 to 125 (FLIK…PAVC), 142 to 162 (WTLF…LTYF), 169 to 189 (AVKV…IFLA), 205 to 225 (VTAI…AQCV), 240 to 260 (VVII…RSKF), 274 to 294 (CSIS…FWTL), and 298 to 318 (FSGL…TKGL).

It belongs to the WTF family. As to quaternary structure, homomer. Forms protein aggregates. The two isoforms can interact with each other and with themselves. High sequence similarity is required for their interaction.

It is found in the spore membrane. It localises to the vacuole membrane. The protein localises to the ascus epiplasm. Its subcellular location is the cytoplasm. The protein resides in the endoplasmic reticulum membrane. In terms of biological role, promotes unequal transmission of alleles from the parental zygote to progeny spores by acting as poison/antidote system where the poison and antidote proteins are produced from the same locus; the poison component is trans-acting and targets all spores within an ascus whereas the antidote component is spore-specific, leading to poisoning of all progeny that do not inherit the allele. Localizes isoform 2 to the vacuole thereby facilitating its degradation. Functionally, forms toxic aggregates that disrupt spore maturation. This is Meiotic driver wtf36 from Schizosaccharomyces pombe (Fission yeast).